A 249-amino-acid chain; its full sequence is tRNA pseudouridine synthase A (249 aa).

The active-site Nucleophile is aspartate 53. Position 111 (tyrosine 111) interacts with substrate.

Belongs to the tRNA pseudouridine synthase TruA family. As to quaternary structure, homodimer.

It catalyses the reaction uridine(38/39/40) in tRNA = pseudouridine(38/39/40) in tRNA. In terms of biological role, formation of pseudouridine at positions 38, 39 and 40 in the anticodon stem and loop of transfer RNAs. In Streptococcus sanguinis (strain SK36), this protein is tRNA pseudouridine synthase A.